A 642-amino-acid chain; its full sequence is Tigger transposable element derived 5 (642 aa).

The tract at residues 1–54 (MYPASPSAGPALHPVPHRARLPRPRCLAEPPRSPAPGPGSTARPPPPAPGPRPR) is disordered. Pro residues predominate over residues 31 to 52 (PRSPAPGPGSTARPPPPAPGPR). Residues 56–107 (AVKMTFRKAYSIKDKLQAIERVKGGERQASVCRDFGVPGGTLRGWLKDEPKL) enclose the HTH psq-type domain. 2 DNA-binding regions (H-T-H motif) span residues 83 to 103 (QASV…WLKD) and 154 to 187 (PVIQ…WQKR). The HTH CENPB-type domain occupies 121-194 (QRKKMRLANE…QKRHGISSQR (74 aa)). Residues 198 to 208 (EAEPPVAGPAP) are compositionally biased toward low complexity. The tract at residues 198-230 (EAEPPVAGPAPVKEEPAQPSSAGLLLDGTPATL) is disordered. Residues 239–364 (DEQIYNANVT…CLQQKAVLLV (126 aa)) form the DDE-1 domain. A disordered region spans residues 543–583 (GLPEGCGEEVAPAAPPSPASLPSSIGAGEEEEEEATEQGGV).

The protein belongs to the tigger transposable element derived protein family.

Its subcellular location is the nucleus. The chain is Tigger transposable element derived 5 (Tigd5) from Rattus norvegicus (Rat).